A 353-amino-acid chain; its full sequence is MERLLNQLNLGVLPYITTKDIEDRLRDKIVAKAKLAFIKDCFEAVVCENGGLFVLTGGAAVTCHIDDDRSALKCIDFDYYGFCAKMFCNLQTNLQKCVDQHYAELDVLTRQVYMSDPLVVLKCYQNGAYRLNGQINLHLNRHIKCIKTQYNDEFDLVRFALQIDITSADGVDEYTDNGVKITTAPLSFNVFFVNVRIMKRPFNADRCIKNFSLFGNEYHVLVSSLQRVLNDQLMCLLKDIFTNKFDYKIERRLKHLKRLFANLPAESYNSCVNDHTDMCLYKEQNETITNFVKKILDISGPALGCRKLMHIYLTTDTFSGQLPAYLTHYVNYPHKSLCDQNWKRFMSCIFSLY.

It is found in the host nucleus. The protein localises to the host cytoplasm. Its function is as follows. May play a role in occlusion-derived virions (ODV) formation and/or regulation of late viral gene expression. The protein is Protein AC18 (DA41) of Autographa californica nuclear polyhedrosis virus (AcMNPV).